The primary structure comprises 181 residues: Peptidyl-prolyl cis-trans isomerase H (181 aa).

The PPIase cyclophilin-type domain occupies phenylalanine 17–glutamate 180.

This sequence belongs to the cyclophilin-type PPIase family. PPIase H subfamily.

The protein resides in the nucleus. The enzyme catalyses [protein]-peptidylproline (omega=180) = [protein]-peptidylproline (omega=0). PPIases accelerate the folding of proteins. It catalyzes the cis-trans isomerization of proline imidic peptide bonds in oligopeptides. The chain is Peptidyl-prolyl cis-trans isomerase H (cyp3) from Aspergillus oryzae (strain ATCC 42149 / RIB 40) (Yellow koji mold).